The sequence spans 247 residues: 5-hydroxytryptamine receptor 2A (247 aa).

Position 1 (Lys-1) is a topological domain, extracellular. A helical membrane pass occupies residues Leu-2–Leu-26. Cys-3 and Cys-82 form a disulfide bridge. Asp-10 contributes to the serotonin binding site. The DRY motif; important for ligand-induced conformation changes signature appears at Asp-27 to Tyr-29. The Cytoplasmic portion of the chain corresponds to Asp-27–Lys-46. The chain crosses the membrane as a helical span at residues Ala-47–Leu-70. Residues Gln-71 to Asp-87 lie on the Extracellular side of the membrane. A helical membrane pass occupies residues Asn-88–Ile-113. Topologically, residues Lys-114–Cys-177 are cytoplasmic. At Ser-135 the chain carries Phosphoserine. A helical membrane pass occupies residues Lys-178–Ile-203. Position 198 (Asn-198) interacts with serotonin. A disulfide bridge links Cys-204 with Cys-208. Topologically, residues Cys-204 to Asp-211 are extracellular. Residues Val-212–Leu-237 form a helical membrane-spanning segment. Positions Asn-231–Tyr-235 match the NPxxY motif; important for ligand-induced conformation changes and signaling motif. Residues Phe-238–Ala-247 are Cytoplasmic-facing.

This sequence belongs to the G-protein coupled receptor 1 family. In terms of assembly, interacts (via C-terminus) with MPDZ and PATJ. May interact (via C-terminus) with MPP3, PRDX6, DLG4, DLG1, CASK, APBA1 and MAGI2. Interacts with GRM2 and DRD2; this may affect signaling. Detected in adult intestine, especially in mucosal epithelium, longitudinal and circular layers of muscularis externa and myenteric plexuses. Highly expressed in Paneth cells, and detected at lower levels in enterocytes (at protein level).

Its subcellular location is the cell membrane. It localises to the cell projection. It is found in the dendrite. The protein localises to the axon. The protein resides in the cytoplasmic vesicle. Its subcellular location is the membrane. It localises to the caveola. It is found in the presynapse. Its activity is regulated as follows. G-protein coupled receptor activity is regulated by lipids: oleamide increases HTR2A-mediated activity. In terms of biological role, G-protein coupled receptor for 5-hydroxytryptamine (serotonin). Also functions as a receptor for various drugs and psychoactive substances, including mescaline, psilocybin, 1-(2,5-dimethoxy-4-iodophenyl)-2-aminopropane (DOI) and lysergic acid diethylamide (LSD). Ligand binding causes a conformation change that triggers signaling via guanine nucleotide-binding proteins (G proteins) and modulates the activity of downstream effectors. HTR2A is coupled to G(q)/G(11) G alpha proteins and activates phospholipase C-beta, releasing diacylglycerol (DAG) and inositol 1,4,5-trisphosphate (IP3) second messengers that modulate the activity of phosphatidylinositol 3-kinase and promote the release of Ca(2+) ions from intracellular stores, respectively. Beta-arrestin family members inhibit signaling via G proteins and mediate activation of alternative signaling pathways. Affects neural activity, perception, cognition and mood. Plays a role in the regulation of behavior, including responses to anxiogenic situations and psychoactive substances. Plays a role in intestinal smooth muscle contraction, and may play a role in arterial vasoconstriction. The chain is 5-hydroxytryptamine receptor 2A (HTR2A) from Cavia porcellus (Guinea pig).